Reading from the N-terminus, the 216-residue chain is MYNVIFLGAPGSGKGTQGEVVAKELKLAHMATGDLFRKAIECGDELGDTVKSYMERGELVPDEITISVVLKHLAGLTDVTGIILDGFPRSLRQAEALDEALVQQGQGIGRVIYINVPGDELVRRLSGRWVCRSCQSPYQSGCAEVTKGKCSRCQGGLYQRPDDTPETVKERLKVYFSKTAPLIEYYRSKGKLSEIDGMAEISEVTKRIISAIKCGK.

Position 11 to 16 (11 to 16) interacts with ATP; sequence GSGKGT. The segment at 31–60 is NMP; sequence ATGDLFRKAIECGDELGDTVKSYMERGELV. Residues Thr-32, Arg-37, 58–60, 86–89, and Gln-93 contribute to the AMP site; these read ELV and GFPR. The interval 127–163 is LID; it reads GRWVCRSCQSPYQSGCAEVTKGKCSRCQGGLYQRPDD. Arg-128 is an ATP binding site. Cys-131, Cys-134, Cys-150, and Cys-153 together coordinate Zn(2+). Residues Arg-160 and Arg-171 each coordinate AMP. Ala-199 provides a ligand contact to ATP.

This sequence belongs to the adenylate kinase family. In terms of assembly, monomer.

It localises to the cytoplasm. The enzyme catalyses AMP + ATP = 2 ADP. The protein operates within purine metabolism; AMP biosynthesis via salvage pathway; AMP from ADP: step 1/1. Catalyzes the reversible transfer of the terminal phosphate group between ATP and AMP. Plays an important role in cellular energy homeostasis and in adenine nucleotide metabolism. The chain is Adenylate kinase from Dehalococcoides mccartyi (strain CBDB1).